A 153-amino-acid chain; its full sequence is Insulin-like growth factor 1.S (153 aa).

Disulfide bonds link Cys-29-Cys-38, Cys-54-Cys-96, Cys-66-Cys-109, and Cys-100-Cys-109. Positions 49–77 (GPETLCGAELVDTLQFVCGDRGFYFSKPT) are b. Residues 78–89 (GYGSNNRRSHHR) are c. The tract at residues 90 to 110 (GIVDECCFQSCDFRRLEMYCA) is a. The segment at 111-118 (PAKQAKSA) is d. The propeptide at 119 to 153 (RSVRTQRHTDMPKAQKEVHPKNTSRGNTGSRGFRM) is e peptide. A disordered region spans residues 119 to 153 (RSVRTQRHTDMPKAQKEVHPKNTSRGNTGSRGFRM). Residues 125–138 (RHTDMPKAQKEVHP) show a composition bias toward basic and acidic residues. Residues 139–153 (KNTSRGNTGSRGFRM) are compositionally biased toward polar residues.

The protein belongs to the insulin family. In terms of tissue distribution, expressed in adult liver, lung, heart, kidney and peritoneal fat.

The protein localises to the secreted. Its function is as follows. The insulin-like growth factors, isolated from plasma, are structurally and functionally related to insulin but have a much higher growth-promoting activity. Promotes head development by inhibiting Wnt signaling during embryogenesis. Acts as a ligand for IGF1R. Binds to the alpha subunit of IGF1R, leading to the activation of the intrinsic tyrosine kinase activity which autophosphorylates tyrosine residues in the beta subunit thus initiatiating a cascade of down-stream signaling events leading to activation of the PI3K-AKT/PKB and the Ras-MAPK pathways. Binds to integrins. Its binding to integrins and subsequent ternary complex formation with integrins and IGFR1 are essential for IGF1 signaling. This chain is Insulin-like growth factor 1.S, found in Xenopus laevis (African clawed frog).